A 155-amino-acid chain; its full sequence is Nascent polypeptide-associated complex subunit beta (155 aa).

Disordered stretches follow at residues 1 to 35 and 116 to 155; these read MDQAKLARMQQSVRIGGKGTPRRKVKKVHKSSGAD and LAESYQNMQKNQAGADGKKDDEEDDIPDLVEGENFESNVE. A compositionally biased stretch (basic residues) spans 20–30; it reads TPRRKVKKVHK. Positions 33–98 constitute an NAC-A/B domain; that stretch reads GADDKKLQAT…GEEKELTELV (66 aa). Positions 136-155 are enriched in acidic residues; it reads DEEDDIPDLVEGENFESNVE.

Belongs to the NAC-beta family. In terms of assembly, part of the nascent polypeptide-associated complex (NAC), consisting of egd2 and egd1. NAC associates with ribosomes via egd1.

Its subcellular location is the cytoplasm. The protein resides in the nucleus. Its function is as follows. Component of the nascent polypeptide-associated complex (NAC), a dynamic component of the ribosomal exit tunnel, protecting the emerging polypeptides from interaction with other cytoplasmic proteins to ensure appropriate nascent protein targeting. The NAC complex also promotes mitochondrial protein import by enhancing productive ribosome interactions with the outer mitochondrial membrane and blocks the inappropriate interaction of ribosomes translating non-secretory nascent polypeptides with translocation sites in the membrane of the endoplasmic reticulum. EGD1 may act as a transcription factor that exert a negative effect on the expression of several genes that are transcribed by RNA polymerase II. This chain is Nascent polypeptide-associated complex subunit beta (egd1), found in Aspergillus niger (strain ATCC MYA-4892 / CBS 513.88 / FGSC A1513).